The sequence spans 187 residues: Probable DNA endonuclease SmrA (187 aa).

Positions 88-169 (LNLLRQPVEE…GSGACYVALR (82 aa)) constitute a Smr domain.

Its function is as follows. Has DNA endonuclease activity. Binds DNA. This is Probable DNA endonuclease SmrA (smrA) from Escherichia coli (strain K12).